A 505-amino-acid chain; its full sequence is uncharacterized protein (505 aa).

Helical transmembrane passes span 9-29 (ANLT…PFIV), 49-69 (YFSV…SVAA), 86-106 (AASV…AFFI), 122-142 (LSIL…GFGA), 156-176 (IQAV…ACFA), 181-201 (QIQL…FYFF), 235-255 (IGVL…LGAS), 261-281 (AAII…ASLF), 310-330 (LLLA…LTIW), 341-361 (LLFI…LFYI), 371-391 (PAIV…TLSG), 395-415 (LGLY…NAIF), 435-455 (IIGP…IQFI), and 464-484 (LIAT…MLVC).

The protein localises to the cell membrane. In terms of biological role, may be involved in the production of the exopolysaccharide (EPS) component of the extracellular matrix during biofilm formation. EPS is responsible for the adhesion of chains of cells into bundles. This is an uncharacterized protein from Bacillus subtilis (strain 168).